The chain runs to 339 residues: Fructose-1,6-bisphosphatase class 1 (339 aa).

Glu-94, Asp-116, Leu-118, and Asp-119 together coordinate Mg(2+). Residues 119 to 122 (DGSS), Asn-210, and Lys-276 contribute to the substrate site. Residue Glu-282 coordinates Mg(2+).

This sequence belongs to the FBPase class 1 family. In terms of assembly, homotetramer. Mg(2+) serves as cofactor.

It is found in the cytoplasm. The catalysed reaction is beta-D-fructose 1,6-bisphosphate + H2O = beta-D-fructose 6-phosphate + phosphate. It functions in the pathway carbohydrate biosynthesis; gluconeogenesis. This Burkholderia ambifaria (strain MC40-6) protein is Fructose-1,6-bisphosphatase class 1.